Reading from the N-terminus, the 375-residue chain is Ribosomal RNA large subunit methyltransferase G (375 aa).

This sequence belongs to the methyltransferase superfamily. RlmG family.

The protein localises to the cytoplasm. It carries out the reaction guanosine(1835) in 23S rRNA + S-adenosyl-L-methionine = N(2)-methylguanosine(1835) in 23S rRNA + S-adenosyl-L-homocysteine + H(+). Its function is as follows. Specifically methylates the guanine in position 1835 (m2G1835) of 23S rRNA. The polypeptide is Ribosomal RNA large subunit methyltransferase G (Erwinia tasmaniensis (strain DSM 17950 / CFBP 7177 / CIP 109463 / NCPPB 4357 / Et1/99)).